The primary structure comprises 4318 residues: Cytoplasmic dynein 2 heavy chain 1 (4318 aa).

A stem region spans residues Met1–Gln1658. Leu147 to Gln154 contributes to the ATP binding site. 2 coiled-coil regions span residues Asp1328–Trp1354 and Leu1402–Leu1431. AAA regions lie at residues Tyr1659–Gly1883, Asp1951–Asp2171, Ala2261–Gly2515, and Thr2623–Val2871. Gly1697–Thr1704 contacts ATP. A coiled-coil region spans residues Glu1959–Val1986. ATP is bound by residues Gly1989–Ser1996, Gly2301–Gly2308, and Gly2661–Arg2668. The interval Asp2888–Ile3176 is stalk. 2 coiled-coil regions span residues Val2908–Glu2989 and Gln3423–Glu3480. 2 AAA regions span residues Leu3251–Gln3487 and Met3699–Arg3914.

The protein belongs to the dynein heavy chain family. The cytoplasmic dynein complex 2 is probably composed by a heavy chain DYH1B homodimer and a number of light intermediate chains.

Its subcellular location is the cytoplasm. The protein resides in the cytoskeleton. It is found in the cilium axoneme. It localises to the cell membrane. Its function is as follows. May function as a motor for intraflagellar retrograde transport. Functions in cilia biogenesis. This chain is Cytoplasmic dynein 2 heavy chain 1 (DYH1B), found in Tripneustes gratilla (Hawaian sea urchin).